The primary structure comprises 174 residues: Shikimate kinase 2 (174 aa).

ATP is bound at residue 12-17; it reads GCGKTT. Mg(2+)-binding residues include Thr-16 and Asp-32. Substrate contacts are provided by Asp-34, Arg-58, and Gly-79. The LID domain stretch occupies residues 112–126; sequence RAYPEDDQRPSLTGK. Arg-120 is an ATP binding site. Substrate is bound at residue Arg-139. Residue Gln-155 participates in ATP binding.

The protein belongs to the shikimate kinase family. AroL subfamily. In terms of assembly, monomer. It depends on Mg(2+) as a cofactor.

It is found in the cytoplasm. The catalysed reaction is shikimate + ATP = 3-phosphoshikimate + ADP + H(+). It functions in the pathway metabolic intermediate biosynthesis; chorismate biosynthesis; chorismate from D-erythrose 4-phosphate and phosphoenolpyruvate: step 5/7. Functionally, catalyzes the specific phosphorylation of the 3-hydroxyl group of shikimic acid using ATP as a cosubstrate. In Sodalis glossinidius (strain morsitans), this protein is Shikimate kinase 2.